A 347-amino-acid polypeptide reads, in one-letter code: Ribosomal RNA small subunit methyltransferase C (347 aa).

Belongs to the methyltransferase superfamily. RsmC family. In terms of assembly, monomer.

Its subcellular location is the cytoplasm. It catalyses the reaction guanosine(1207) in 16S rRNA + S-adenosyl-L-methionine = N(2)-methylguanosine(1207) in 16S rRNA + S-adenosyl-L-homocysteine + H(+). Functionally, specifically methylates the guanine in position 1207 of 16S rRNA in the 30S particle. The chain is Ribosomal RNA small subunit methyltransferase C from Shewanella baltica (strain OS195).